Here is a 585-residue protein sequence, read N- to C-terminus: Glutamate decarboxylase 2 (585 aa).

The interval 1 to 25 is disordered; sequence MASPGSGFWSFGSEDGSGDPENPGT. Residues Ser-3, Ser-6, Ser-10, Ser-13, and Ser-17 each carry the phosphoserine modification. S-palmitoyl cysteine attachment occurs at residues Cys-30 and Cys-45. 181–183 is a binding site for substrate; the sequence is QLS. Lys-396 bears the N6-(pyridoxal phosphate)lysine mark. Arg-558 provides a ligand contact to substrate.

It belongs to the group II decarboxylase family. As to quaternary structure, homodimer. Requires pyridoxal 5'-phosphate as cofactor. Post-translationally, the N-terminus is blocked. In terms of processing, phosphorylated; which does not affect kinetic parameters or subcellular location. Palmitoylated; which is required for presynaptic clustering.

The protein localises to the cytoplasm. It is found in the cytosol. It localises to the cytoplasmic vesicle. Its subcellular location is the presynaptic cell membrane. The protein resides in the golgi apparatus membrane. The enzyme catalyses L-glutamate + H(+) = 4-aminobutanoate + CO2. In terms of biological role, catalyzes the production of GABA. The polypeptide is Glutamate decarboxylase 2 (Gad2) (Rattus norvegicus (Rat)).